A 232-amino-acid chain; its full sequence is Large ribosomal subunit protein uL1 (232 aa).

It belongs to the universal ribosomal protein uL1 family. As to quaternary structure, part of the 50S ribosomal subunit.

Its function is as follows. Binds directly to 23S rRNA. The L1 stalk is quite mobile in the ribosome, and is involved in E site tRNA release. Protein L1 is also a translational repressor protein, it controls the translation of the L11 operon by binding to its mRNA. The sequence is that of Large ribosomal subunit protein uL1 from Paraburkholderia xenovorans (strain LB400).